Consider the following 474-residue polypeptide: Myocyte-specific enhancer factor 2C (474 aa).

One can recognise an MADS-box domain in the interval 3-57 (RKKIQITRIMDERNRQVTFTKRKFGLMKKAYELSVLCDCEIALIIFNSTNKLFQY). Lysine 4 bears the N6-acetyllysine mark. Positions 58–86 (ASTDMDKVLLKYTEYNEPHESRTNSDIVE) form a DNA-binding region, mef2-type. Serine 59 is modified (phosphoserine; by CK2). The interval 91–118 (KGLNGCDSPDPDADDSVGHSPESEDKYR) is disordered. Serine 98 and serine 106 each carry phosphoserine. The residue at position 108 (glycine 108) is a Phosphothreonine. The residue at position 110 (serine 110) is a Phosphoserine. N6-acetyllysine occurs at positions 116 and 119. Serine 222 and serine 228 each carry phosphoserine. Residues lysine 234 and lysine 239 each carry the N6-acetyllysine modification. Serine 240 carries the phosphoserine modification. N6-acetyllysine is present on residues lysine 252 and lysine 264. The beta domain stretch occupies residues 271 to 278 (SEDVDLLL). Residues threonine 293 and threonine 300 each carry the phosphothreonine; by MAPK14 modification. Positions 368 to 399 (ACTSTHLSQSSNLSLPSTQSLSIKSEPVSPPR) are transcription repressor. A compositionally biased stretch (polar residues) spans 375 to 390 (SQSSNLSLPSTQSLSI). Residues 375–474 (SQSSNLSLPS…RMRLSEGWAT (100 aa)) form a disordered region. A Glycyl lysine isopeptide (Lys-Gly) (interchain with G-Cter in SUMO) cross-link involves residue lysine 391. Residue serine 396 is modified to Phosphoserine; by CDK5. Serine 420 is modified (phosphoserine; by MAPK7). Low complexity predominate over residues 420 to 433 (SPVDSLSSCSSSYD). Residues 434–444 (GSDREDHRNEF) show a composition bias toward basic and acidic residues. Phosphoserine is present on serine 446.

Belongs to the MEF2 family. In terms of assembly, forms a complex with class II HDACs in undifferentiating cells. On myogenic differentiation, HDACs are released into the cytoplasm allowing MEF2s to interact with other proteins for activation. Interacts with EP300 in differentiating cells; the interaction acetylates MEF2C leading to increased DNA binding and activation. Interacts with HDAC7 and CARM1. Interacts with HDAC4, HDAC7 AND HDAC9; the interaction with HDACs represses transcriptional activity. Interacts with LPIN1. Interacts with MYOCD. Interacts with AKAP13. Interacts with FOXK1; the interaction inhibits MEF2C transactivation activity. Interacts (via N-terminus) with HABP4; this interaction decreases DNA-binding activity of MEF2C in myocardial cells in response to mechanical stress. Interacts with JPH2; interaction specifically takes place with the Junctophilin-2 N-terminal fragment cleavage product of JPH2. Interacts (via MADS box) with SOX18. Interacts with PHF7; the interaction promotes MEF2C binding to its transcription targets. Phosphorylation on Ser-59 enhances DNA binding activity. Phosphorylation on Ser-396 is required for Lys-391 sumoylation and inhibits transcriptional activity. Post-translationally, acetylated by p300 on several sites in diffentiating myocytes. Acetylation on Lys-4 increases DNA binding and transactivation. In terms of processing, sumoylated on Lys-391 with SUMO2 but not by SUMO1 represses transcriptional activity. Proteolytically cleaved in cerebellar granule neurons, probably by caspase 7, following neurotoxicity. Preferentially cleaves the CDK5-mediated hyperphosphorylated form which leads to neuron apoptosis and transcriptional inactivation. As to expression, widely expressed though mainly restricted to skeletal and cardiac muscle, brain, neurons and lymphocytes. Beta domain-lacking isoforms are the most predominantly expressed in all tissues including skeletal and cardiac muscle and brain. Only brain expresses all isoforms. Expression occurs primarily in the internal granule cell layer of the olfactory bulb, cortex, thalamus, hippocampus and cerebellum. Low levels in the cerebellum and hindbrain. Expressed throughout the cortex, including the frontal and entorhinal cortex, dentate gyrus, and basolateral amygdala. Selectively expressed in B-cells but not in T-cells, and its expression increases as B-cells mature.

The protein localises to the nucleus. Its subcellular location is the cytoplasm. It localises to the sarcoplasm. Transcription activator which binds specifically to the MEF2 element present in the regulatory regions of many muscle-specific genes. Controls cardiac morphogenesis and myogenesis, and is also involved in vascular development. Enhances transcriptional activation mediated by SOX18. May also be involved in neurogenesis and in the development of cortical architecture. Isoforms that lack the repressor domain are more active than isoform 1. Plays an essential role in hippocampal-dependent learning and memory by suppressing the number of excitatory synapses and thus regulating basal and evoked synaptic transmission. Crucial for normal neuronal development, distribution, and electrical activity in the neocortex. Necessary for proper development of megakaryocytes and platelets and for bone marrow B-lymphopoiesis. Required for B-cell survival and proliferation in response to BCR stimulation, efficient IgG1 antibody responses to T-cell-dependent antigens and for normal induction of germinal center B-cells. This is Myocyte-specific enhancer factor 2C from Mus musculus (Mouse).